The following is a 141-amino-acid chain: Galactose-6-phosphate isomerase subunit LacA (141 aa).

Belongs to the LacAB/RpiB family. Heteromultimeric protein consisting of LacA and LacB.

It catalyses the reaction aldehydo-D-galactose 6-phosphate = keto-D-tagatose 6-phosphate. It functions in the pathway carbohydrate metabolism; D-galactose 6-phosphate degradation; D-tagatose 6-phosphate from D-galactose 6-phosphate: step 1/1. This is Galactose-6-phosphate isomerase subunit LacA from Streptococcus equi subsp. zooepidemicus (strain MGCS10565).